The primary structure comprises 688 residues: Elongation factor G 2 (688 aa).

A tr-type G domain is found at 7–282 (DSIRNIGIIS…AVAAYLPSPR (276 aa)). Residues 16-23 (SHIDAGKT), 80-84 (DTPGH), and 134-137 (NKMD) contribute to the GTP site.

The protein belongs to the TRAFAC class translation factor GTPase superfamily. Classic translation factor GTPase family. EF-G/EF-2 subfamily.

Its subcellular location is the cytoplasm. Functionally, catalyzes the GTP-dependent ribosomal translocation step during translation elongation. During this step, the ribosome changes from the pre-translocational (PRE) to the post-translocational (POST) state as the newly formed A-site-bound peptidyl-tRNA and P-site-bound deacylated tRNA move to the P and E sites, respectively. Catalyzes the coordinated movement of the two tRNA molecules, the mRNA and conformational changes in the ribosome. The chain is Elongation factor G 2 from Geobacter metallireducens (strain ATCC 53774 / DSM 7210 / GS-15).